The chain runs to 115 residues: Large ribosomal subunit protein uL22c (115 aa).

It belongs to the universal ribosomal protein uL22 family. Part of the 50S ribosomal subunit.

The protein localises to the plastid. Its subcellular location is the chloroplast. Functionally, this protein binds specifically to 23S rRNA. The globular domain of the protein is located near the polypeptide exit tunnel on the outside of the subunit, while an extended beta-hairpin is found that lines the wall of the exit tunnel in the center of the 70S ribosome. In Thalassiosira pseudonana (Marine diatom), this protein is Large ribosomal subunit protein uL22c (rpl22).